The sequence spans 446 residues: ATP-dependent protease ATPase subunit HslU (446 aa).

ATP contacts are provided by residues Val18, 60–65 (GVGKTE), Asp259, Glu324, and Arg396.

Belongs to the ClpX chaperone family. HslU subfamily. A double ring-shaped homohexamer of HslV is capped on each side by a ring-shaped HslU homohexamer. The assembly of the HslU/HslV complex is dependent on binding of ATP.

It is found in the cytoplasm. In terms of biological role, ATPase subunit of a proteasome-like degradation complex; this subunit has chaperone activity. The binding of ATP and its subsequent hydrolysis by HslU are essential for unfolding of protein substrates subsequently hydrolyzed by HslV. HslU recognizes the N-terminal part of its protein substrates and unfolds these before they are guided to HslV for hydrolysis. This is ATP-dependent protease ATPase subunit HslU from Acidovorax ebreus (strain TPSY) (Diaphorobacter sp. (strain TPSY)).